We begin with the raw amino-acid sequence, 551 residues long: Alkaline nuclease (551 aa).

Belongs to the herpesviridae alkaline nuclease family. As to quaternary structure, interacts with major DNA-binding protein; this interaction increases the nuclease processivity of the alkaline exonuclease.

It localises to the host nucleus. The protein resides in the host cytoplasm. In terms of biological role, plays a role in processing non linear or branched viral DNA intermediates in order to promote the production of mature packaged unit-length linear progeny viral DNA molecules. Exhibits endonuclease and exonuclease activities and accepts both double-stranded and single-stranded DNA as substrate. Exonuclease digestion of DNA is in the 5'-&gt; 3' direction and the products are 5'-monophosphate nucleosides. Additionally, forms a recombinase with the major DNA-binding protein, which displays strand exchange activity. This Varicella-zoster virus (strain Oka vaccine) (HHV-3) protein is Alkaline nuclease.